A 166-amino-acid chain; its full sequence is 2-C-methyl-D-erythritol 2,4-cyclodiphosphate synthase (166 aa).

Residues D15 and H17 each coordinate a divalent metal cation. 4-CDP-2-C-methyl-D-erythritol 2-phosphate is bound by residues 15 to 17 and 43 to 44; these read DIH and HS. Residue H51 participates in a divalent metal cation binding. 4-CDP-2-C-methyl-D-erythritol 2-phosphate is bound by residues 65–67, 141–144, and R151; these read DIG and TTNE.

Belongs to the IspF family. As to quaternary structure, homotrimer. It depends on a divalent metal cation as a cofactor.

It catalyses the reaction 4-CDP-2-C-methyl-D-erythritol 2-phosphate = 2-C-methyl-D-erythritol 2,4-cyclic diphosphate + CMP. It participates in isoprenoid biosynthesis; isopentenyl diphosphate biosynthesis via DXP pathway; isopentenyl diphosphate from 1-deoxy-D-xylulose 5-phosphate: step 4/6. Its function is as follows. Involved in the biosynthesis of isopentenyl diphosphate (IPP) and dimethylallyl diphosphate (DMAPP), two major building blocks of isoprenoid compounds. Catalyzes the conversion of 4-diphosphocytidyl-2-C-methyl-D-erythritol 2-phosphate (CDP-ME2P) to 2-C-methyl-D-erythritol 2,4-cyclodiphosphate (ME-CPP) with a corresponding release of cytidine 5-monophosphate (CMP). The chain is 2-C-methyl-D-erythritol 2,4-cyclodiphosphate synthase from Prochlorococcus marinus (strain MIT 9215).